The chain runs to 430 residues: Meiotically up-regulated gene 132 protein (430 aa).

Belongs to the UPF0300 family.

It is found in the mitochondrion. Has a role in meiosis. The protein is Meiotically up-regulated gene 132 protein (mug132) of Schizosaccharomyces pombe (strain 972 / ATCC 24843) (Fission yeast).